The primary structure comprises 657 residues: Glycogen debranching enzyme (657 aa).

D336 acts as the Nucleophile in catalysis. E371 serves as the catalytic Proton donor. The segment at 460–479 (ANGEENRDGTNNNYSNNHGK) is disordered.

Belongs to the glycosyl hydrolase 13 family.

The catalysed reaction is Hydrolysis of (1-&gt;6)-alpha-D-glucosidic linkages to branches with degrees of polymerization of three or four glucose residues in limit dextrin.. Its pathway is glycan degradation; glycogen degradation. Its function is as follows. Removes maltotriose and maltotetraose chains that are attached by 1,6-alpha-linkage to the limit dextrin main chain, generating a debranched limit dextrin. This is Glycogen debranching enzyme from Shigella dysenteriae serotype 1 (strain Sd197).